The following is a 114-amino-acid chain: Large ribosomal subunit protein uL22 (114 aa).

It belongs to the universal ribosomal protein uL22 family. Part of the 50S ribosomal subunit.

In terms of biological role, this protein binds specifically to 23S rRNA; its binding is stimulated by other ribosomal proteins, e.g. L4, L17, and L20. It is important during the early stages of 50S assembly. It makes multiple contacts with different domains of the 23S rRNA in the assembled 50S subunit and ribosome. Its function is as follows. The globular domain of the protein is located near the polypeptide exit tunnel on the outside of the subunit, while an extended beta-hairpin is found that lines the wall of the exit tunnel in the center of the 70S ribosome. The protein is Large ribosomal subunit protein uL22 of Desulfitobacterium hafniense (strain DSM 10664 / DCB-2).